Reading from the N-terminus, the 448-residue chain is Antizyme inhibitor 1 (448 aa).

This sequence belongs to the Orn/Lys/Arg decarboxylase class-II family. ODC antizyme inhibitor subfamily. As to quaternary structure, monomer. Interacts with OAZ1 and OAZ3; this interaction disrupts the interaction between the antizyme and ODC1. Ubiquitinated, leading to its proteasomal degradation; a process that is reduced in presence of antizyme OAZ1.

It is found in the nucleus. In terms of biological role, antizyme inhibitor (AZI) protein that positively regulates ornithine decarboxylase (ODC) activity and polyamine uptake. AZI is an enzymatically inactive ODC homolog that counteracts the negative effect of ODC antizymes (AZs) OAZ1, OAZ2 and OAZ3 on ODC activity by competing with ODC for antizyme-binding. Inhibits antizyme-dependent ODC degradation and releases ODC monomers from their inactive complex with antizymes, leading to formation of the catalytically active ODC homodimer and restoring polyamine production. This chain is Antizyme inhibitor 1 (AZIN1), found in Pongo abelii (Sumatran orangutan).